Reading from the N-terminus, the 193-residue chain is dCTP deaminase (193 aa).

DCTP is bound by residues 110-115 (RSSLAR), D128, 136-138 (VLE), Y171, K178, and Q182. The active-site Proton donor/acceptor is the E138. The tract at residues 169-193 (RPYNRRQDAKYRDQQGAVASRIDKD) is disordered.

This sequence belongs to the dCTP deaminase family. In terms of assembly, homotrimer.

It carries out the reaction dCTP + H2O + H(+) = dUTP + NH4(+). It functions in the pathway pyrimidine metabolism; dUMP biosynthesis; dUMP from dCTP (dUTP route): step 1/2. Catalyzes the deamination of dCTP to dUTP. The sequence is that of dCTP deaminase from Citrobacter koseri (strain ATCC BAA-895 / CDC 4225-83 / SGSC4696).